The chain runs to 254 residues: Protein Thf1 (254 aa).

Residues 183 to 217 (SDKLQKDLDLYRSNLEKMEQARITMEEAIQADRRK) adopt a coiled-coil conformation. The span at 213 to 227 (ADRRKREQREQEKLA) shows a compositional bias: basic and acidic residues. Residues 213–254 (ADRRKREQREQEKLAKAAAAEAPAALEASSDNPEPETSETPS) form a disordered region. Positions 228–240 (KAAAAEAPAALEA) are enriched in low complexity. The span at 245–254 (PEPETSETPS) shows a compositional bias: acidic residues.

It belongs to the THF1 family.

In terms of biological role, may be involved in photosynthetic membrane biogenesis. The sequence is that of Protein Thf1 from Synechococcus elongatus (strain ATCC 33912 / PCC 7942 / FACHB-805) (Anacystis nidulans R2).